The sequence spans 396 residues: Phosphoglycerate kinase (396 aa).

Substrate-binding positions include 21–23 (DFN), arginine 36, 59–62 (HLGK), arginine 119, and arginine 156. ATP-binding positions include lysine 206, glutamate 325, and 352 to 355 (GGDS).

This sequence belongs to the phosphoglycerate kinase family. As to quaternary structure, monomer.

It localises to the cytoplasm. It catalyses the reaction (2R)-3-phosphoglycerate + ATP = (2R)-3-phospho-glyceroyl phosphate + ADP. The protein operates within carbohydrate degradation; glycolysis; pyruvate from D-glyceraldehyde 3-phosphate: step 2/5. This is Phosphoglycerate kinase from Staphylococcus saprophyticus subsp. saprophyticus (strain ATCC 15305 / DSM 20229 / NCIMB 8711 / NCTC 7292 / S-41).